Reading from the N-terminus, the 266-residue chain is Vitamin B12-binding protein (266 aa).

Residues 1-22 (MAKQMFRALVALLLTLPVWLYA) form the signal peptide. One can recognise a Fe/B12 periplasmic-binding domain in the interval 25-266 (RVITLSPANT…QLCNALSQVN (242 aa)). Residues Tyr50 and 242 to 246 (DWFER) each bind cyanocob(III)alamin. Cys183 and Cys259 are joined by a disulfide.

This sequence belongs to the BtuF family. As to quaternary structure, the complex is composed of two ATP-binding proteins (BtuD), two transmembrane proteins (BtuC) and a solute-binding protein (BtuF).

It is found in the periplasm. Functionally, part of the ABC transporter complex BtuCDF involved in vitamin B12 import. Binds vitamin B12 and delivers it to the periplasmic surface of BtuC. The polypeptide is Vitamin B12-binding protein (Salmonella paratyphi A (strain ATCC 9150 / SARB42)).